We begin with the raw amino-acid sequence, 87 residues long: Retinal rod rhodopsin-sensitive cGMP 3',5'-cyclic phosphodiesterase subunit gamma (87 aa).

N-acetylmethionine is present on M1. Positions 1–12 (MNLEPPKGEIRS) are enriched in basic and acidic residues. Residues 1–55 (MNLEPPKGEIRSATRVIGGPVTPRKGPPKFKQRQTRQFKSKPPKKGVQGFGDDIP) form a disordered region. The span at 26–44 (GPPKFKQRQTRQFKSKPPK) shows a compositional bias: basic residues.

The protein belongs to the rod/cone cGMP-PDE gamma subunit family. In terms of assembly, oligomer composed of two catalytic chains (alpha and beta), an inhibitory chain (gamma) and the delta chain.

The enzyme catalyses 3',5'-cyclic GMP + H2O = GMP + H(+). Participates in processes of transmission and amplification of the visual signal. cGMP-PDEs are the effector molecules in G-protein-mediated phototransduction in vertebrate rods and cones. This is Retinal rod rhodopsin-sensitive cGMP 3',5'-cyclic phosphodiesterase subunit gamma (Pde6g) from Mus musculus (Mouse).